The primary structure comprises 152 residues: NAD(P)H-quinone oxidoreductase subunit N (152 aa).

Belongs to the complex I NdhN subunit family. As to quaternary structure, NDH-1 can be composed of about 15 different subunits; different subcomplexes with different compositions have been identified which probably have different functions.

It is found in the cellular thylakoid membrane. It carries out the reaction a plastoquinone + NADH + (n+1) H(+)(in) = a plastoquinol + NAD(+) + n H(+)(out). The catalysed reaction is a plastoquinone + NADPH + (n+1) H(+)(in) = a plastoquinol + NADP(+) + n H(+)(out). Its function is as follows. NDH-1 shuttles electrons from an unknown electron donor, via FMN and iron-sulfur (Fe-S) centers, to quinones in the respiratory and/or the photosynthetic chain. The immediate electron acceptor for the enzyme in this species is believed to be plastoquinone. Couples the redox reaction to proton translocation, and thus conserves the redox energy in a proton gradient. Cyanobacterial NDH-1 also plays a role in inorganic carbon-concentration. The chain is NAD(P)H-quinone oxidoreductase subunit N from Prochlorococcus marinus (strain SARG / CCMP1375 / SS120).